Consider the following 501-residue polypeptide: Protein YLS7 (501 aa).

The chain crosses the membrane as a helical; Signal-anchor for type II membrane protein span at residues 25-45; the sequence is IAFAIGGLTSFVIFASLLLFT. The disordered stretch occupies residues 69-131; sequence HSIHDPDRNP…NVSIDEEATQ (63 aa). Positions 78–89 are enriched in low complexity; sequence PSPVSSSESPPV. Residues 94 to 113 show a composition bias toward basic and acidic residues; that stretch reads SDDKVLPKGSHDSNDVRLGE. Over residues 114–124 the composition is skewed to polar residues; that stretch reads ETNSGKSSNVS. A GDS motif motif is present at residues 211–213; that stretch reads GDS. The interval 438–467 is disordered; sequence RHDGHPGPYRSPDPKKITKRGPDGQPPPQD. Over residues 449–459 the composition is skewed to basic and acidic residues; the sequence is PDPKKITKRGP. The DCXHWCLPGXXDXWN motif signature appears at 467 to 481; sequence DCLHWCMPGPVDTWN.

Belongs to the PC-esterase family. TBL subfamily. As to expression, expressed in roots, cauline leaves and flowers.

The protein resides in the membrane. Its function is as follows. May act as a bridging protein that binds pectin and other cell wall polysaccharides. Probably involved in maintaining esterification of pectins. May be involved in the specific O-acetylation of cell wall polymers. This chain is Protein YLS7 (YLS7), found in Arabidopsis thaliana (Mouse-ear cress).